We begin with the raw amino-acid sequence, 355 residues long: Holliday junction branch migration complex subunit RuvB (355 aa).

Residues 1 to 43 (MEEMDDFTVRRGEREDITGAAGPPEERPLDPAAFEEDDEPTLR) are disordered. Residues 4–203 (MDDFTVRRGE…FGFSARLDYY (200 aa)) are large ATPase domain (RuvB-L). Residues 7–17 (FTVRRGEREDI) are compositionally biased toward basic and acidic residues. ATP-binding positions include Leu-42, Arg-43, Gly-84, Lys-87, Thr-88, Ser-89, 150–152 (EDF), Arg-193, Tyr-203, and Arg-240. Residue Thr-88 participates in Mg(2+) binding. Residues 204-274 (EPHELEKIVV…TANAALEMQG (71 aa)) form a small ATPAse domain (RuvB-S) region. The interval 277–355 (HLGLDRTDRE…HLGFPVRDGG (79 aa)) is head domain (RuvB-H). The DNA site is built by Arg-313, Arg-332, and Arg-337.

Belongs to the RuvB family. Homohexamer. Forms an RuvA(8)-RuvB(12)-Holliday junction (HJ) complex. HJ DNA is sandwiched between 2 RuvA tetramers; dsDNA enters through RuvA and exits via RuvB. An RuvB hexamer assembles on each DNA strand where it exits the tetramer. Each RuvB hexamer is contacted by two RuvA subunits (via domain III) on 2 adjacent RuvB subunits; this complex drives branch migration. In the full resolvosome a probable DNA-RuvA(4)-RuvB(12)-RuvC(2) complex forms which resolves the HJ.

It localises to the cytoplasm. It catalyses the reaction ATP + H2O = ADP + phosphate + H(+). The RuvA-RuvB-RuvC complex processes Holliday junction (HJ) DNA during genetic recombination and DNA repair, while the RuvA-RuvB complex plays an important role in the rescue of blocked DNA replication forks via replication fork reversal (RFR). RuvA specifically binds to HJ cruciform DNA, conferring on it an open structure. The RuvB hexamer acts as an ATP-dependent pump, pulling dsDNA into and through the RuvAB complex. RuvB forms 2 homohexamers on either side of HJ DNA bound by 1 or 2 RuvA tetramers; 4 subunits per hexamer contact DNA at a time. Coordinated motions by a converter formed by DNA-disengaged RuvB subunits stimulates ATP hydrolysis and nucleotide exchange. Immobilization of the converter enables RuvB to convert the ATP-contained energy into a lever motion, pulling 2 nucleotides of DNA out of the RuvA tetramer per ATP hydrolyzed, thus driving DNA branch migration. The RuvB motors rotate together with the DNA substrate, which together with the progressing nucleotide cycle form the mechanistic basis for DNA recombination by continuous HJ branch migration. Branch migration allows RuvC to scan DNA until it finds its consensus sequence, where it cleaves and resolves cruciform DNA. The protein is Holliday junction branch migration complex subunit RuvB of Rubrobacter xylanophilus (strain DSM 9941 / JCM 11954 / NBRC 16129 / PRD-1).